Consider the following 353-residue polypeptide: JmjC domain-containing protein E (353 aa).

A JmjC domain is found at 138 to 348 (YYIQYQNNSL…ETTKYQKQIK (211 aa)).

The chain is JmjC domain-containing protein E (jcdE) from Dictyostelium discoideum (Social amoeba).